The following is a 161-amino-acid chain: Phosphopantetheine adenylyltransferase (161 aa).

Ser-11 is a binding site for substrate. ATP is bound by residues 11–12 (SF) and His-19. Positions 43, 75, and 89 each coordinate substrate. ATP is bound by residues 90-92 (GLR), Glu-100, and 125-131 (YSFISSS).

This sequence belongs to the bacterial CoaD family. As to quaternary structure, homohexamer. Requires Mg(2+) as cofactor.

It is found in the cytoplasm. It carries out the reaction (R)-4'-phosphopantetheine + ATP + H(+) = 3'-dephospho-CoA + diphosphate. Its pathway is cofactor biosynthesis; coenzyme A biosynthesis; CoA from (R)-pantothenate: step 4/5. Functionally, reversibly transfers an adenylyl group from ATP to 4'-phosphopantetheine, yielding dephospho-CoA (dPCoA) and pyrophosphate. This chain is Phosphopantetheine adenylyltransferase, found in Staphylococcus saprophyticus subsp. saprophyticus (strain ATCC 15305 / DSM 20229 / NCIMB 8711 / NCTC 7292 / S-41).